The chain runs to 193 residues: Acyl carrier protein phosphodiesterase (193 aa).

Belongs to the AcpH family.

It catalyses the reaction holo-[ACP] + H2O = apo-[ACP] + (R)-4'-phosphopantetheine + H(+). Functionally, converts holo-ACP to apo-ACP by hydrolytic cleavage of the phosphopantetheine prosthetic group from ACP. The protein is Acyl carrier protein phosphodiesterase of Salmonella agona (strain SL483).